The chain runs to 544 residues: Chaperonin GroEL (544 aa).

ATP-binding positions include 30–33 (TLGP), Lys-51, 87–91 (DGTTT), Gly-415, 479–481 (NAA), and Asp-495.

This sequence belongs to the chaperonin (HSP60) family. As to quaternary structure, forms a cylinder of 14 subunits composed of two heptameric rings stacked back-to-back. Interacts with the co-chaperonin GroES.

The protein localises to the cytoplasm. The catalysed reaction is ATP + H2O + a folded polypeptide = ADP + phosphate + an unfolded polypeptide.. Its function is as follows. Together with its co-chaperonin GroES, plays an essential role in assisting protein folding. The GroEL-GroES system forms a nano-cage that allows encapsulation of the non-native substrate proteins and provides a physical environment optimized to promote and accelerate protein folding. This Francisella tularensis subsp. novicida (strain U112) protein is Chaperonin GroEL.